An 894-amino-acid chain; its full sequence is Mitogen-activated protein kinase kinase kinase kinase 3 (894 aa).

Residue methionine 1 is modified to N-acetylmethionine. Residues 16–273 enclose the Protein kinase domain; sequence FELIQRIGSG…AEKLLQHPFV (258 aa). ATP contacts are provided by residues 22–30 and lysine 45; that span reads IGSGTYGDV. The active-site Proton acceptor is the aspartate 136. Residue serine 329 is modified to Phosphoserine. Positions 339-358 are disordered; it reads DPPLRKETEPHHELPDSDGF. The span at 340–353 shows a compositional bias: basic and acidic residues; the sequence is PPLRKETEPHHELP. At serine 398 the chain carries Phosphoserine. Residues 408-537 are disordered; the sequence is HVAHLEDDEG…VPKPISNGLP (130 aa). The segment covering 473-487 has biased composition (pro residues); sequence HVPPRPPPPRLPPQK. Residues 508–520 show a composition bias toward polar residues; it reads LYQQQSEQRGTNL. One can recognise a CNH domain in the interval 556 to 867; it reads PLKIHCATSW…IFRLLGSDRV (312 aa).

Belongs to the protein kinase superfamily. STE Ser/Thr protein kinase family. STE20 subfamily. Interacts with SH3GL2. Interaction appears to regulate MAP4K3-mediated JNK activation. Mg(2+) serves as cofactor.

The catalysed reaction is L-seryl-[protein] + ATP = O-phospho-L-seryl-[protein] + ADP + H(+). It catalyses the reaction L-threonyl-[protein] + ATP = O-phospho-L-threonyl-[protein] + ADP + H(+). Serine/threonine kinase that plays a role in the response to environmental stress. Appears to act upstream of the JUN N-terminal pathway. Activator of the Hippo signaling pathway which plays a pivotal role in organ size control and tumor suppression by restricting proliferation and promoting apoptosis. MAP4Ks act in parallel to and are partially redundant with STK3/MST2 and STK4/MST2 in the phosphorylation and activation of LATS1/2, and establish MAP4Ks as components of the expanded Hippo pathway. The polypeptide is Mitogen-activated protein kinase kinase kinase kinase 3 (Map4k3) (Mus musculus (Mouse)).